The chain runs to 850 residues: RPA-related protein RADX (850 aa).

The tract at residues 1 to 31 (MSGESGQPQPGPSHAGLYLEHPERDQAGVPG) is disordered. The OB DNA-binding region spans 228–331 (WNSRKNFPAL…LISTMEICLN (104 aa)). 2 disordered regions span residues 575 to 612 (EAFWNASRPSTSQAAGKEDHCHERGSKRSQDDRPMGSQ) and 632 to 671 (GPSANPVPVPQPHSSAQMKGSKHNTPSQESSTAYTTGKSR). Over residues 590 to 608 (GKEDHCHERGSKRSQDDRP) the composition is skewed to basic and acidic residues. The span at 643–668 (PHSSAQMKGSKHNTPSQESSTAYTTG) shows a compositional bias: polar residues.

Its subcellular location is the chromosome. Functionally, single-stranded DNA-binding protein recruited to replication forks to maintain genome stability. Prevents fork collapse by antagonizing the accumulation of RAD51 at forks to ensure the proper balance of fork remodeling and protection without interfering with the capacity of cells to complete homologous recombination of double-strand breaks. The chain is RPA-related protein RADX from Mus musculus (Mouse).